The sequence spans 260 residues: Apolipoprotein A-I (260 aa).

A signal peptide spans M1 to A18. The segment at A32–K63 is 3 X approximate tandem repeats. 2 consecutive repeat copies span residues T64–S85 and M87–N107. A 10 X approximate tandem repeats region spans residues T64–S260. One copy of the 3; half-length repeat lies at V108–A118. 5 consecutive repeat copies span residues P119–T140, P141–E162, P163–M184, P185–Q206, and P207–T225. The stretch at V226–T236 is one 9; half-length repeat. Copy 10 of the repeat occupies P237–S260.

Belongs to the apolipoprotein A1/A4/E family. As to expression, strong expression in liver with lower expression in intestine.

It localises to the secreted. Participates in the reverse transport of cholesterol from tissues to the liver for excretion by promoting cholesterol efflux from tissues and by acting as a cofactor for the lecithin cholesterol acyltransferase (LCAT). This chain is Apolipoprotein A-I (apoa1), found in Sparus aurata (Gilthead sea bream).